Reading from the N-terminus, the 317-residue chain is Ribosomal RNA small subunit methyltransferase H (317 aa).

S-adenosyl-L-methionine-binding positions include 37 to 39, D56, F85, D106, and Q113; that span reads AGH.

The protein belongs to the methyltransferase superfamily. RsmH family.

It is found in the cytoplasm. The catalysed reaction is cytidine(1402) in 16S rRNA + S-adenosyl-L-methionine = N(4)-methylcytidine(1402) in 16S rRNA + S-adenosyl-L-homocysteine + H(+). In terms of biological role, specifically methylates the N4 position of cytidine in position 1402 (C1402) of 16S rRNA. The polypeptide is Ribosomal RNA small subunit methyltransferase H (Lactococcus lactis subsp. cremoris (strain SK11)).